The chain runs to 295 residues: Bifunctional protein FolD (295 aa).

NADP(+) is bound by residues 166-168 (GRS), S191, and I232.

Belongs to the tetrahydrofolate dehydrogenase/cyclohydrolase family. Homodimer.

The catalysed reaction is (6R)-5,10-methylene-5,6,7,8-tetrahydrofolate + NADP(+) = (6R)-5,10-methenyltetrahydrofolate + NADPH. The enzyme catalyses (6R)-5,10-methenyltetrahydrofolate + H2O = (6R)-10-formyltetrahydrofolate + H(+). It participates in one-carbon metabolism; tetrahydrofolate interconversion. Catalyzes the oxidation of 5,10-methylenetetrahydrofolate to 5,10-methenyltetrahydrofolate and then the hydrolysis of 5,10-methenyltetrahydrofolate to 10-formyltetrahydrofolate. In Rhodopseudomonas palustris (strain ATCC BAA-98 / CGA009), this protein is Bifunctional protein FolD.